A 271-amino-acid chain; its full sequence is MFIDKQTVERHFSKSAHLYDGVNHVQRKMAHRLVQLLDEKRRDAKDEPRAILDIGCGTGWLTRECLKSFPQATIDAVDLSKQMLEVAEKNVSSHPNVQFIQGDIEKMVREKPSAKTYDVIVANAVFQWLDKPTETVAQLRSWLKPNGLLLFSTFGPDTFYELHDSFQLAAKQLGIIDERRGLDYLSKTEWKRTLDGLFAELTIHEEKAIESYATVEQFLHTVKKMGATYSQSSRPLSKRYYQLMKEIYEQRYRTEDSIPATYDCLYVLCQA.

It belongs to the methyltransferase superfamily.

It catalyses the reaction malonyl-[ACP] + S-adenosyl-L-methionine = malonyl-[ACP] methyl ester + S-adenosyl-L-homocysteine. Its pathway is cofactor biosynthesis; biotin biosynthesis. Functionally, converts the free carboxyl group of a malonyl-thioester to its methyl ester by transfer of a methyl group from S-adenosyl-L-methionine (SAM). It allows to synthesize pimeloyl-ACP via the fatty acid synthetic pathway. The chain is Malonyl-[acyl-carrier protein] O-methyltransferase from Halalkalibacterium halodurans (strain ATCC BAA-125 / DSM 18197 / FERM 7344 / JCM 9153 / C-125) (Bacillus halodurans).